The chain runs to 278 residues: Probable endonuclease 4 (278 aa).

Zn(2+) is bound by residues histidine 69, histidine 109, glutamate 145, aspartate 179, histidine 182, histidine 214, aspartate 227, histidine 229, and glutamate 259.

This sequence belongs to the AP endonuclease 2 family. The cofactor is Zn(2+).

It carries out the reaction Endonucleolytic cleavage to 5'-phosphooligonucleotide end-products.. Its function is as follows. Endonuclease IV plays a role in DNA repair. It cleaves phosphodiester bonds at apurinic or apyrimidinic (AP) sites, generating a 3'-hydroxyl group and a 5'-terminal sugar phosphate. The polypeptide is Probable endonuclease 4 (Bacteroides fragilis (strain ATCC 25285 / DSM 2151 / CCUG 4856 / JCM 11019 / LMG 10263 / NCTC 9343 / Onslow / VPI 2553 / EN-2)).